Here is a 392-residue protein sequence, read N- to C-terminus: Small ribosomal subunit protein bS1 (392 aa).

S1 motif domains lie at 16 to 90 (GDKV…LSKR), 108 to 173 (DEVI…LSRK), 194 to 262 (GDVI…LSIK), and 279 to 348 (DDVI…LSIK). The disordered stretch occupies residues 361–380 (ASTTQSYLEDDNDEDKPTLG).

Belongs to the bacterial ribosomal protein bS1 family.

Functionally, binds mRNA; thus facilitating recognition of the initiation point. It is needed to translate mRNA with a short Shine-Dalgarno (SD) purine-rich sequence. The chain is Small ribosomal subunit protein bS1 (rpsA) from Staphylococcus epidermidis (strain ATCC 35984 / DSM 28319 / BCRC 17069 / CCUG 31568 / BM 3577 / RP62A).